Reading from the N-terminus, the 408-residue chain is Peptidase T (408 aa).

H78 lines the Zn(2+) pocket. Residue D80 is part of the active site. D141 contributes to the Zn(2+) binding site. E175 (proton acceptor) is an active-site residue. Positions 176, 198, and 380 each coordinate Zn(2+).

Belongs to the peptidase M20B family. Requires Zn(2+) as cofactor.

The protein resides in the cytoplasm. It carries out the reaction Release of the N-terminal residue from a tripeptide.. Its function is as follows. Cleaves the N-terminal amino acid of tripeptides. This Clostridium botulinum (strain Okra / Type B1) protein is Peptidase T.